The primary structure comprises 218 residues: Recombination protein RecR (218 aa).

The C4-type zinc finger occupies 56–71 (CRICCNISREEVCRIC). The 117-residue stretch at 79-195 (GTICVVEEPK…VVSRLASGMP (117 aa)) folds into the Toprim domain.

The protein belongs to the RecR family.

May play a role in DNA repair. It seems to be involved in an RecBC-independent recombinational process of DNA repair. It may act with RecF and RecO. This chain is Recombination protein RecR, found in Corynebacterium glutamicum (strain R).